Consider the following 293-residue polypeptide: Ribosomal protein L11 methyltransferase (293 aa).

Positions 145, 166, 188, and 230 each coordinate S-adenosyl-L-methionine.

It belongs to the methyltransferase superfamily. PrmA family.

It localises to the cytoplasm. It carries out the reaction L-lysyl-[protein] + 3 S-adenosyl-L-methionine = N(6),N(6),N(6)-trimethyl-L-lysyl-[protein] + 3 S-adenosyl-L-homocysteine + 3 H(+). Functionally, methylates ribosomal protein L11. The protein is Ribosomal protein L11 methyltransferase of Escherichia coli O139:H28 (strain E24377A / ETEC).